Here is a 290-residue protein sequence, read N- to C-terminus: Phosphoribosylaminoimidazole-succinocarboxamide synthase (290 aa).

The protein belongs to the SAICAR synthetase family.

The catalysed reaction is 5-amino-1-(5-phospho-D-ribosyl)imidazole-4-carboxylate + L-aspartate + ATP = (2S)-2-[5-amino-1-(5-phospho-beta-D-ribosyl)imidazole-4-carboxamido]succinate + ADP + phosphate + 2 H(+). It functions in the pathway purine metabolism; IMP biosynthesis via de novo pathway; 5-amino-1-(5-phospho-D-ribosyl)imidazole-4-carboxamide from 5-amino-1-(5-phospho-D-ribosyl)imidazole-4-carboxylate: step 1/2. This chain is Phosphoribosylaminoimidazole-succinocarboxamide synthase, found in Haemophilus influenzae (strain PittGG).